The following is a 425-amino-acid chain: Serine--tRNA ligase (425 aa).

230–232 (TAE) provides a ligand contact to L-serine. Residue 261–263 (RSE) coordinates ATP. Glu-284 contributes to the L-serine binding site. Residue 348–351 (EISS) coordinates ATP. Ser-384 contributes to the L-serine binding site.

This sequence belongs to the class-II aminoacyl-tRNA synthetase family. Type-1 seryl-tRNA synthetase subfamily. As to quaternary structure, homodimer. The tRNA molecule binds across the dimer.

It localises to the cytoplasm. It carries out the reaction tRNA(Ser) + L-serine + ATP = L-seryl-tRNA(Ser) + AMP + diphosphate + H(+). It catalyses the reaction tRNA(Sec) + L-serine + ATP = L-seryl-tRNA(Sec) + AMP + diphosphate + H(+). It functions in the pathway aminoacyl-tRNA biosynthesis; selenocysteinyl-tRNA(Sec) biosynthesis; L-seryl-tRNA(Sec) from L-serine and tRNA(Sec): step 1/1. Its function is as follows. Catalyzes the attachment of serine to tRNA(Ser). Is also able to aminoacylate tRNA(Sec) with serine, to form the misacylated tRNA L-seryl-tRNA(Sec), which will be further converted into selenocysteinyl-tRNA(Sec). The polypeptide is Serine--tRNA ligase (Streptococcus pyogenes serotype M49 (strain NZ131)).